The primary structure comprises 1148 residues: Protein pianissimo A (1148 aa).

Positions 1–34 (MTSSDSSVNTTSSSFGNISISSPNHSSSTPPLNN) are enriched in low complexity. Residues 1-41 (MTSSDSSVNTTSSSFGNISISSPNHSSSTPPLNNGNGNNVS) form a disordered region. In terms of domain architecture, N-terminal Ras-GEF spans 803–914 (KVSALSLNVL…STSGVYLPPH (112 aa)).

The protein belongs to the RICTOR family. As to quaternary structure, part of a complex, TORC2, consisting of tor, lst8, piaA and ripA. Additional proteins, such as 14-3-3 and heat-shock proteins, may also belong to the TORC2 complex.

It is found in the cytoplasm. Functionally, regulates cell growth, chemotaxis, signal relay and the actin cytoskeleton. Required for chemoattractant receptor and G protein-mediated activation of the 12 transmembrane domain adenylyl cyclase. Functions as a part of protein complex TORC2. TORC2, is presumed to be indirectly negatively modulated by rapamycin and regulates actin polarization. TORC2, but not TORC1, negatively regulates phagocytosis. This protein and dagA protein CRAC, a cytosolic regulator, are both essential for activation of the enzyme adenylyl cyclase. This protein and CRAC do not function redundantly. Both proteins are integral components of the adenylyl cyclase activation pathway. This Dictyostelium discoideum (Social amoeba) protein is Protein pianissimo A (piaA).